The following is a 406-amino-acid chain: Cysteine desulfurase (406 aa).

Position 226 is an N6-(pyridoxal phosphate)lysine (Lys-226). Catalysis depends on Cys-364, which acts as the Cysteine persulfide intermediate.

Belongs to the class-V pyridoxal-phosphate-dependent aminotransferase family. Csd subfamily. Homodimer. Interacts with SufE and the SufBCD complex composed of SufB, SufC and SufD. The interaction with SufE is required to mediate the direct transfer of the sulfur atom from the S-sulfanylcysteine. Pyridoxal 5'-phosphate is required as a cofactor.

It is found in the cytoplasm. It carries out the reaction (sulfur carrier)-H + L-cysteine = (sulfur carrier)-SH + L-alanine. The catalysed reaction is L-selenocysteine + AH2 = hydrogenselenide + L-alanine + A + H(+). The protein operates within cofactor biosynthesis; iron-sulfur cluster biosynthesis. Functionally, cysteine desulfurases mobilize the sulfur from L-cysteine to yield L-alanine, an essential step in sulfur metabolism for biosynthesis of a variety of sulfur-containing biomolecules. Component of the suf operon, which is activated and required under specific conditions such as oxidative stress and iron limitation. Acts as a potent selenocysteine lyase in vitro, that mobilizes selenium from L-selenocysteine. Selenocysteine lyase activity is however unsure in vivo. This Escherichia coli O139:H28 (strain E24377A / ETEC) protein is Cysteine desulfurase.